A 7354-amino-acid chain; its full sequence is Microtubule-actin cross-linking factor 1, isoforms 1/2/3/4 (7354 aa).

Residues 1–47 (MSSSDEETLSERSCRSERSCRSERSYRSERSGSLSPCPPGDTLPWNL) are disordered. An actin-binding region spans residues 1–295 (MSSSDEETLS…VITYVSSIYD (295 aa)). Position 4 is a phosphoserine (Ser4). A compositionally biased stretch (basic and acidic residues) spans 9–30 (LSERSCRSERSCRSERSYRSER). Position 35 is a phosphoserine (Ser35). Position 42 is a phosphothreonine (Thr42). Ser57 is subject to Phosphoserine. Calponin-homology (CH) domains lie at 78 to 181 (RVQK…LHFQ) and 194 to 298 (MSAK…DAFP). The LRR 1 repeat unit spans residues 148–171 (QRQVKLVNIRNDDITDGNPKLTLG). A Phosphoserine modification is found at Ser280. 2 LRR repeats span residues 377–399 (LYKL…YHPN) and 441–464 (LNCE…LESG). The region spanning 868 to 925 (KSTLSVKAICDYRQIEITICKNDECVLEDNSQRTKWKVISPTGNEAMVPSVCFLIPPP) is the SH3 domain. An LRR 5 repeat occupies 1050–1073 (ISELKNIRLLLEECEQRLLKQIQS). Residue Ser1122 is modified to Phosphoserine. LRR repeat units follow at residues 1128–1154 (ATTL…VYLN), 1187–1210 (PADL…VKDK), and 1257–1282 (HRVI…DYRA). Phosphoserine is present on residues Ser1367 and Ser1376. 5 Plectin repeats span residues 1577–1619 (LVLL…QLLG), 1654–1696 (LKVL…ELQS), 1769–1809 (RLLE…CAIL), 1811–1848 (RQLQ…VILE), and 1855–1885 (GLLL…HKIL). Phosphoserine is present on residues Ser2051, Ser2077, and Ser2081. 2 stretches are compositionally biased toward basic and acidic residues: residues 2120-2131 (KEEQAETLREEN) and 2145-2155 (SEGKDLSTEKS). Residues 2120 to 2155 (KEEQAETLREENISGDPLLVECPEESEGKDLSTEKS) are disordered. Plectin repeat units follow at residues 2276 to 2316 (STLS…VKLM), 2352 to 2393 (NVLM…RILE), 2394 to 2425 (GQVI…DTAD), 2487 to 2528 (LLTK…LRKV), and 2671 to 2715 (LKVL…ASHQ). Disordered regions lie at residues 2806–2841 (AGIR…DSKV), 2951–2978 (EMGG…EVTI), and 3058–3099 (SQET…HISK). The segment covering 2812–2837 (NGEKAEKGRKISVEMEGQRQDEKASS) has biased composition (basic and acidic residues). Positions 2968-2978 (SEEESDQEVTI) are enriched in acidic residues. 2 positions are modified to phosphoserine: Ser3082 and Ser3085. LRR repeat units follow at residues 3225-3244 (VGQR…LPTR), 3606-3630 (SGKS…IQSH), and 3657-3681 (LTAL…TRVA). 2 Spectrin repeats span residues 3845 to 3920 (ELQK…NFEE) and 3962 to 4070 (QYQQ…ALLQ). Residue Ser3889 is modified to Phosphoserine. The LRR 12 repeat unit spans residues 3898–3920 (KGDLRFVTISGQKVLETENNFEE). 2 LRR repeats span residues 4087 to 4112 (LQSI…VIQE) and 4223 to 4249 (IQEL…TLGS). Residues 4428-4536 (RMEEVQKEAS…TVARQKQLEE (109 aa)) form a Spectrin 3 repeat. Phosphoserine is present on residues Ser4458 and Ser4483. LRR repeat units lie at residues 4473–4496 (KAFL…LAGL), 4563–4583 (GVLG…QFML), and 4728–4751 (KKRL…RMNR). One copy of the Spectrin 4 repeat lies at 4759-4863 (TQQFQQMFDE…KTANRQSRLK (105 aa)). Ser4921 is subject to Phosphoserine. 3 LRR repeats span residues 5010 to 5035 (NKNL…YLRN), 5131 to 5153 (NKIQ…MLEE), and 5240 to 5263 (KDQV…LIQS). Spectrin repeat units lie at residues 5195-5300 (EDFY…QLQE), 5307-5409 (KFQD…QLED), 5414-5506 (AKQF…ADIT), 5631-5735 (RSQQ…ARLE), 5742-5844 (NQFW…ALDE), 5961-6066 (LAEK…KLED), 6071-6175 (AVQY…HKLE), 6181-6284 (LGQF…QQLQ), 6289-6395 (QAQG…KLEE), 6400-6503 (ATEF…RSLD), 6508-6614 (RAKQ…KLEE), 6621-6722 (QFMD…RLEQ), and 6726-6830 (QAEE…QRLE). Residue Thr5394 is modified to Phosphothreonine. LRR repeat units lie at residues 5654-5678 (MALG…AFSI) and 5763-5787 (AQLP…QLRE). Ser5988 carries the phosphoserine modification. Lys6166 carries the post-translational modification N6-acetyllysine. One copy of the LRR 23 repeat lies at 6452–6475 (RDQIIELDQTGNQLKFLSQKQDVV). Residues 6904–6937 (SVEPTHAPFMEKSRSGSRKSLNQPTPPPMPILSQ) form a disordered region. Ser6923 is subject to Phosphoserine. 2 consecutive EF-hand domains span residues 7001 to 7036 (HKKS…SKFP) and 7037 to 7072 (TTKL…NKDA). Asp7014, Asp7016, Asp7018, Lys7020, Glu7025, Asp7050, Asp7052, Asp7054, Tyr7056, and Glu7061 together coordinate Ca(2+). In terms of domain architecture, GAR spans 7077-7155 (TDADKIEDEV…EFLVKNDPCR (79 aa)). Residues 7077–7354 (TDADKIEDEV…ASPRTPGPKR (278 aa)) are C-terminal tail. The tract at residues 7171-7354 (PEGASQGMTP…ASPRTPGPKR (184 aa)) is disordered. Over residues 7191 to 7225 (SSRAASPTRSSSSASQSNHSCTSMPSSPATPASGT) the composition is skewed to low complexity. Phosphothreonine is present on Thr7220. Residues 7242-7261 (FHSSRTSLAGDTSNSSSPAS) show a composition bias toward polar residues. Ser7245 and Ser7258 each carry phosphoserine. Low complexity predominate over residues 7276–7290 (SRPGSRAGSRAGSRA). The interval 7279 to 7294 (GSRAGSRAGSRASSRR) is 4 X 4 AA tandem repeats of [GS]-S-R-[AR]. A phosphoserine mark is found at Ser7296 and Ser7299. Over residues 7305–7315 (ETQSACSDTSE) the composition is skewed to polar residues. Positions 7316–7327 (SSAAGGQGSSRR) are enriched in low complexity.

Belongs to the plakin or cytolinker family. As to quaternary structure, interacts with AXIN1, LRP6 and GOLGA4. Found in a complex composed of MACF1, APC, AXIN1, CTNNB1 and GSK3B. Interacts with MAPRE1, CLASP1 and CLASP2. Interacts with CAMSAP3. Phosphorylated on serine residues in the C-terminal tail by GSK3B. Phosphorylation inhibits microtubule-binding and this plays a critical role in bulge stem cell migration and skin wound repair. Wnt-signaling can repress phosphorylation. Enriched in the hair follicle stem cells (at protein level). Isoform 1 and isoform 2 are ubiquitous expressed, with higher levels seen in lung, heart, thymus, spleen and brain.

The protein localises to the cytoplasm. Its subcellular location is the cytoskeleton. The protein resides in the golgi apparatus. It localises to the cell membrane. It is found in the cell projection. The protein localises to the ruffle membrane. Functionally, F-actin-binding protein which plays a role in cross-linking actin to other cytoskeletal proteins and also binds to microtubules. Plays an important role in ERBB2-dependent stabilization of microtubules at the cell cortex. Acts as a positive regulator of Wnt receptor signaling pathway and is involved in the translocation of AXIN1 and its associated complex (composed of APC, CTNNB1 and GSK3B) from the cytoplasm to the cell membrane. Has actin-regulated ATPase activity and is essential for controlling focal adhesions (FAs) assembly and dynamics. Interaction with CAMSAP3 at the minus ends of non-centrosomal microtubules tethers microtubules minus-ends to actin filaments, regulating focal adhesion size and cell migration. May play role in delivery of transport vesicles containing GPI-linked proteins from the trans-Golgi network through its interaction with GOLGA4. Plays a key role in wound healing and epidermal cell migration. Required for efficient upward migration of bulge cells in response to wounding and this function is primarily rooted in its ability to coordinate microtubule dynamics and polarize hair follicle stem cells. As a regulator of actin and microtubule arrangement and stabilization, it plays an essential role in neurite outgrowth, branching and spine formation during brain development. The polypeptide is Microtubule-actin cross-linking factor 1, isoforms 1/2/3/4 (Mus musculus (Mouse)).